Consider the following 323-residue polypeptide: DNA-directed RNA polymerase subunit alpha (323 aa).

Residues M1 to N225 are alpha N-terminal domain (alpha-NTD). Positions P243–S323 are alpha C-terminal domain (alpha-CTD).

This sequence belongs to the RNA polymerase alpha chain family. As to quaternary structure, homodimer. The RNAP catalytic core consists of 2 alpha, 1 beta, 1 beta' and 1 omega subunit. When a sigma factor is associated with the core the holoenzyme is formed, which can initiate transcription.

It catalyses the reaction RNA(n) + a ribonucleoside 5'-triphosphate = RNA(n+1) + diphosphate. DNA-dependent RNA polymerase catalyzes the transcription of DNA into RNA using the four ribonucleoside triphosphates as substrates. The protein is DNA-directed RNA polymerase subunit alpha of Roseiflexus castenholzii (strain DSM 13941 / HLO8).